The sequence spans 623 residues: Bifunctional methionine biosynthesis protein MetXA/MetW (623 aa).

Over residues 1 to 17 (MTSGRSTRVTMFESQAS) the composition is skewed to polar residues. Positions 1–30 (MTSGRSTRVTMFESQASMGEPSNEDLSSTD) are disordered. The AB hydrolase-1 domain occupies 77–385 (NAVLVCHAVS…TTNAGHDAFL (309 aa)). Ser-183 (nucleophile) is an active-site residue. Substrate is bound at residue Arg-253. Active-site residues include Asp-348 and His-381. Asp-382 is a binding site for substrate. Residues 417–619 (NVDEESILEI…NADTAVIAFH (203 aa)) form a metW region.

In the N-terminal section; belongs to the AB hydrolase superfamily. MetX family. This sequence in the C-terminal section; belongs to the MetW family. Homodimer.

It localises to the cytoplasm. It catalyses the reaction L-homoserine + acetyl-CoA = O-acetyl-L-homoserine + CoA. It participates in amino-acid biosynthesis; L-methionine biosynthesis via de novo pathway; O-acetyl-L-homoserine from L-homoserine: step 1/1. Functionally, transfers an acetyl group from acetyl-CoA to L-homoserine, forming acetyl-L-homoserine. This Rhodopirellula baltica (strain DSM 10527 / NCIMB 13988 / SH1) protein is Bifunctional methionine biosynthesis protein MetXA/MetW.